Here is a 485-residue protein sequence, read N- to C-terminus: Aspartyl/glutamyl-tRNA(Asn/Gln) amidotransferase subunit B (485 aa).

The protein belongs to the GatB/GatE family. GatB subfamily. Heterotrimer of A, B and C subunits.

It catalyses the reaction L-glutamyl-tRNA(Gln) + L-glutamine + ATP + H2O = L-glutaminyl-tRNA(Gln) + L-glutamate + ADP + phosphate + H(+). The catalysed reaction is L-aspartyl-tRNA(Asn) + L-glutamine + ATP + H2O = L-asparaginyl-tRNA(Asn) + L-glutamate + ADP + phosphate + 2 H(+). Allows the formation of correctly charged Asn-tRNA(Asn) or Gln-tRNA(Gln) through the transamidation of misacylated Asp-tRNA(Asn) or Glu-tRNA(Gln) in organisms which lack either or both of asparaginyl-tRNA or glutaminyl-tRNA synthetases. The reaction takes place in the presence of glutamine and ATP through an activated phospho-Asp-tRNA(Asn) or phospho-Glu-tRNA(Gln). The chain is Aspartyl/glutamyl-tRNA(Asn/Gln) amidotransferase subunit B from Borrelia garinii subsp. bavariensis (strain ATCC BAA-2496 / DSM 23469 / PBi) (Borreliella bavariensis).